The primary structure comprises 274 residues: Large ribosomal subunit protein uL2 (274 aa).

The disordered stretch occupies residues 224-274 (VAMNPVDHPHGGGEGRTSGGRHPVTPWGIPTKGYKTRRNKRSNKLIVQKRK). The segment covering 257 to 274 (YKTRRNKRSNKLIVQKRK) has biased composition (basic residues).

This sequence belongs to the universal ribosomal protein uL2 family. In terms of assembly, part of the 50S ribosomal subunit. Forms a bridge to the 30S subunit in the 70S ribosome.

One of the primary rRNA binding proteins. Required for association of the 30S and 50S subunits to form the 70S ribosome, for tRNA binding and peptide bond formation. It has been suggested to have peptidyltransferase activity; this is somewhat controversial. Makes several contacts with the 16S rRNA in the 70S ribosome. This chain is Large ribosomal subunit protein uL2, found in Francisella tularensis subsp. holarctica (strain FTNF002-00 / FTA).